The following is a 183-amino-acid chain: ATP synthase subunit delta (183 aa).

It belongs to the ATPase delta chain family. F-type ATPases have 2 components, F(1) - the catalytic core - and F(0) - the membrane proton channel. F(1) has five subunits: alpha(3), beta(3), gamma(1), delta(1), epsilon(1). F(0) has three main subunits: a(1), b(2) and c(10-14). The alpha and beta chains form an alternating ring which encloses part of the gamma chain. F(1) is attached to F(0) by a central stalk formed by the gamma and epsilon chains, while a peripheral stalk is formed by the delta and b chains.

It localises to the cell inner membrane. In terms of biological role, f(1)F(0) ATP synthase produces ATP from ADP in the presence of a proton or sodium gradient. F-type ATPases consist of two structural domains, F(1) containing the extramembraneous catalytic core and F(0) containing the membrane proton channel, linked together by a central stalk and a peripheral stalk. During catalysis, ATP synthesis in the catalytic domain of F(1) is coupled via a rotary mechanism of the central stalk subunits to proton translocation. Functionally, this protein is part of the stalk that links CF(0) to CF(1). It either transmits conformational changes from CF(0) to CF(1) or is implicated in proton conduction. In Chloroherpeton thalassium (strain ATCC 35110 / GB-78), this protein is ATP synthase subunit delta.